A 173-amino-acid chain; its full sequence is Protein FAM180A (173 aa).

The signal sequence occupies residues 1–17 (MSWKALTILLVFSSTQA).

It belongs to the FAM180 family.

It is found in the secreted. The protein is Protein FAM180A (Fam180a) of Mus musculus (Mouse).